We begin with the raw amino-acid sequence, 514 residues long: Protein phosphatase 1H (514 aa).

A Phosphoserine modification is found at S7. Positions 77-507 (ATGYAEVINA…DDISVYVIPL (431 aa)) constitute a PPM-type phosphatase domain. The segment at 109–135 (AVTSTPNRNSSKRRSSLPNGEGLQLKE) is disordered. T113 bears the Phosphothreonine mark. Phosphoserine occurs at positions 124 and 211. An Omega-N-methylarginine modification is found at R213. A Phosphoserine modification is found at S221. At T224 the chain carries Phosphothreonine. At S422 the chain carries Phosphoserine.

Belongs to the PP2C family.

It is found in the nucleus. Its subcellular location is the cytoplasm. The catalysed reaction is O-phospho-L-seryl-[protein] + H2O = L-seryl-[protein] + phosphate. It carries out the reaction O-phospho-L-threonyl-[protein] + H2O = L-threonyl-[protein] + phosphate. Dephosphorylates CDKN1B at 'Thr-187', thus removing a signal for proteasomal degradation. The protein is Protein phosphatase 1H (PPM1H) of Homo sapiens (Human).